The sequence spans 181 residues: Large ribosomal subunit protein uL5c (181 aa).

It belongs to the universal ribosomal protein uL5 family. As to quaternary structure, part of the 50S ribosomal subunit; contacts the 5S rRNA.

Its subcellular location is the plastid. The protein localises to the chloroplast. Functionally, binds 5S rRNA, forms part of the central protuberance of the 50S subunit. This chain is Large ribosomal subunit protein uL5c (rpl5), found in Porphyra purpurea (Red seaweed).